The primary structure comprises 95 residues: Beta-defensin 132 (95 aa).

An N-terminal signal peptide occupies residues 1–22; that stretch reads MKFLLLVLAALGFLTQVIPASG. Cystine bridges form between Cys27/Cys55, Cys35/Cys49, and Cys39/Cys56. A disordered region spans residues 72–95; the sequence is GNHWPSRSRNTQRKNKKQQTTVTP.

This sequence belongs to the beta-defensin family.

It is found in the secreted. In terms of biological role, has antibacterial activity. This Macaca fascicularis (Crab-eating macaque) protein is Beta-defensin 132 (DEFB132).